We begin with the raw amino-acid sequence, 81 residues long: Small ribosomal subunit protein bS16 (81 aa).

The protein belongs to the bacterial ribosomal protein bS16 family.

The chain is Small ribosomal subunit protein bS16 from Neisseria gonorrhoeae (strain ATCC 700825 / FA 1090).